A 251-amino-acid polypeptide reads, in one-letter code: SRR1-like protein (251 aa).

It belongs to the SRR1 family.

The protein localises to the cytoplasm. Its subcellular location is the nucleus. The protein is SRR1-like protein of Schizosaccharomyces pombe (strain 972 / ATCC 24843) (Fission yeast).